The sequence spans 288 residues: Protoheme IX farnesyltransferase (288 aa).

9 consecutive transmembrane segments (helical) span residues 8–28, 35–55, 80–100, 107–127, 132–152, 162–182, 208–228, 229–249, and 266–286; these read ATKPGIVLSNLMSFIGGFLLA, YLIFLVTLLGVLFIVTAGCVL, ISILTCLIYALICSIIGIYLL, LTMLLAIIGLIVYVGIYTKCM, IYSTIIGSFSGAIPPVIGYCA, LLLLLIFCLWQMPHSYAIAIL, IVIYIVAFIVTTILLNISGYT, TSYQYLIVTNFINFWWLYLAL, and FIFSIIAITSLSLMMSLDSIF.

It belongs to the UbiA prenyltransferase family. Protoheme IX farnesyltransferase subfamily.

It is found in the cell membrane. It carries out the reaction heme b + (2E,6E)-farnesyl diphosphate + H2O = Fe(II)-heme o + diphosphate. Its pathway is porphyrin-containing compound metabolism; heme O biosynthesis; heme O from protoheme: step 1/1. Functionally, converts heme B (protoheme IX) to heme O by substitution of the vinyl group on carbon 2 of heme B porphyrin ring with a hydroxyethyl farnesyl side group. The protein is Protoheme IX farnesyltransferase of Baumannia cicadellinicola subsp. Homalodisca coagulata.